A 278-amino-acid polypeptide reads, in one-letter code: Pantothenate synthetase (278 aa).

26–33 contacts ATP; that stretch reads MGNLHEGH. The active-site Proton donor is histidine 33. Glutamine 57 provides a ligand contact to (R)-pantoate. Glutamine 57 provides a ligand contact to beta-alanine. 144–147 contacts ATP; that stretch reads GKKD. (R)-pantoate is bound at residue glutamine 150. ATP is bound by residues glycine 173 and 181–184; that span reads LSSR.

Belongs to the pantothenate synthetase family. Homodimer.

Its subcellular location is the cytoplasm. It carries out the reaction (R)-pantoate + beta-alanine + ATP = (R)-pantothenate + AMP + diphosphate + H(+). It participates in cofactor biosynthesis; (R)-pantothenate biosynthesis; (R)-pantothenate from (R)-pantoate and beta-alanine: step 1/1. Functionally, catalyzes the condensation of pantoate with beta-alanine in an ATP-dependent reaction via a pantoyl-adenylate intermediate. The polypeptide is Pantothenate synthetase (Neisseria meningitidis serogroup C / serotype 2a (strain ATCC 700532 / DSM 15464 / FAM18)).